Here is a 385-residue protein sequence, read N- to C-terminus: Lipoyl synthase, mitochondrial (385 aa).

Residues C107, C112, C118, C137, C141, C144, and S352 each contribute to the [4Fe-4S] cluster site. One can recognise a Radical SAM core domain in the interval K122 to L341.

This sequence belongs to the radical SAM superfamily. Lipoyl synthase family. It depends on [4Fe-4S] cluster as a cofactor.

Its subcellular location is the mitochondrion. It carries out the reaction [[Fe-S] cluster scaffold protein carrying a second [4Fe-4S](2+) cluster] + N(6)-octanoyl-L-lysyl-[protein] + 2 oxidized [2Fe-2S]-[ferredoxin] + 2 S-adenosyl-L-methionine + 4 H(+) = [[Fe-S] cluster scaffold protein] + N(6)-[(R)-dihydrolipoyl]-L-lysyl-[protein] + 4 Fe(3+) + 2 hydrogen sulfide + 2 5'-deoxyadenosine + 2 L-methionine + 2 reduced [2Fe-2S]-[ferredoxin]. It participates in protein modification; protein lipoylation via endogenous pathway; protein N(6)-(lipoyl)lysine from octanoyl-[acyl-carrier-protein]: step 2/2. Catalyzes the radical-mediated insertion of two sulfur atoms into the C-6 and C-8 positions of the octanoyl moiety bound to the lipoyl domains of lipoate-dependent enzymes, thereby converting the octanoylated domains into lipoylated derivatives. In Meyerozyma guilliermondii (strain ATCC 6260 / CBS 566 / DSM 6381 / JCM 1539 / NBRC 10279 / NRRL Y-324) (Yeast), this protein is Lipoyl synthase, mitochondrial.